The primary structure comprises 367 residues: Aflatoxin B1 aldehyde reductase member 2 (367 aa).

The N-terminal 46 residues, 1–46 (MLRAVSRAVSRAAVRCAWRSGPSVARPLAMSRSPAPRAVSGAPLRP), are a transit peptide targeting the mitochondrion. Residues 27-46 (PLAMSRSPAPRAVSGAPLRP) form a disordered region. Serine 40 is subject to Phosphoserine. Threonine 48 is subject to Phosphothreonine. An NADP(+)-binding site is contributed by aspartate 80. Tyrosine 85 (proton donor) is an active-site residue. Lysine 136 bears the N6-acetyllysine mark. Residue histidine 149 participates in substrate binding. Residues 179-180 (SN), glutamine 205, 234-244 (NPLAGGLLTGK), and arginine 258 contribute to the NADP(+) site. An N6-succinyllysine modification is found at lysine 244. At serine 263 the chain carries Phosphoserine. Substrate contacts are provided by tyrosine 268 and arginine 271. 326 to 334 (SSLEQLEQN) lines the NADP(+) pocket. Arginine 367 provides a ligand contact to substrate.

It belongs to the aldo/keto reductase family. Aldo/keto reductase 2 subfamily. As to quaternary structure, homodimer. Heterodimer with AKR7A1.

The protein localises to the mitochondrion. It is found in the golgi apparatus. The protein resides in the golgi stack. It localises to the cytoplasm. It carries out the reaction 4-hydroxybutanoate + NADP(+) = succinate semialdehyde + NADPH + H(+). Catalyzes the NADPH-dependent reduction of succinic semialdehyde to gamma-hydroxybutyrate. May have an important role in producing the neuromodulator gamma-hydroxybutyrate (GHB). Has broad substrate specificity. Can reduce the dialdehyde protein-binding form of aflatoxin B1 (AFB1) to the non-binding AFB1 dialcohol. Acts as a 2-carboxybenzaldehyde reductase. The sequence is that of Aflatoxin B1 aldehyde reductase member 2 (Akr7a2) from Rattus norvegicus (Rat).